We begin with the raw amino-acid sequence, 192 residues long: UPF0149 protein YE3397 (192 aa).

This sequence belongs to the UPF0149 family.

This chain is UPF0149 protein YE3397, found in Yersinia enterocolitica serotype O:8 / biotype 1B (strain NCTC 13174 / 8081).